We begin with the raw amino-acid sequence, 465 residues long: Na(+)-translocating NADH-quinone reductase subunit A (465 aa).

Belongs to the NqrA family. As to quaternary structure, composed of six subunits; NqrA, NqrB, NqrC, NqrD, NqrE and NqrF.

It carries out the reaction a ubiquinone + n Na(+)(in) + NADH + H(+) = a ubiquinol + n Na(+)(out) + NAD(+). Functionally, NQR complex catalyzes the reduction of ubiquinone-1 to ubiquinol by two successive reactions, coupled with the transport of Na(+) ions from the cytoplasm to the periplasm. NqrA to NqrE are probably involved in the second step, the conversion of ubisemiquinone to ubiquinol. This is Na(+)-translocating NADH-quinone reductase subunit A from Chlamydia trachomatis serovar A (strain ATCC VR-571B / DSM 19440 / HAR-13).